The following is a 449-amino-acid chain: Uric acid permease PucJ (449 aa).

Helical transmembrane passes span 11 to 31 (LSLQ…LLVG), 41 to 61 (LSYL…LQTL), 67 to 87 (GIGL…MIAI), 91 to 111 (YGIH…FLFA), 119 to 139 (VLFP…SLVP), 158 to 178 (EYGS…ILVL), 191 to 211 (VLIG…VSFS), 229 to 249 (APAF…VIIV), 277 to 297 (AEGI…NTFA), 313 to 333 (IVVT…IAAL), 334 to 354 (ASAV…GMVI), 372 to 392 (LLTI…PGIF), and 401 to 421 (ILVS…NLFF).

Belongs to the nucleobase:cation symporter-2 (NCS2) (TC 2.A.40) family.

The protein resides in the cell membrane. Functionally, uptake of uric acid. In Bacillus subtilis (strain 168), this protein is Uric acid permease PucJ (pucJ).